A 262-amino-acid polypeptide reads, in one-letter code: Indole-3-glycerol phosphate synthase (262 aa).

Belongs to the TrpC family.

It catalyses the reaction 1-(2-carboxyphenylamino)-1-deoxy-D-ribulose 5-phosphate + H(+) = (1S,2R)-1-C-(indol-3-yl)glycerol 3-phosphate + CO2 + H2O. It participates in amino-acid biosynthesis; L-tryptophan biosynthesis; L-tryptophan from chorismate: step 4/5. This chain is Indole-3-glycerol phosphate synthase, found in Staphylococcus epidermidis (strain ATCC 12228 / FDA PCI 1200).